We begin with the raw amino-acid sequence, 196 residues long: dTTP/UTP pyrophosphatase (196 aa).

The active-site Proton acceptor is the Asp-75.

Belongs to the Maf family. YhdE subfamily. Requires a divalent metal cation as cofactor.

The protein localises to the cytoplasm. It catalyses the reaction dTTP + H2O = dTMP + diphosphate + H(+). It carries out the reaction UTP + H2O = UMP + diphosphate + H(+). Its function is as follows. Nucleoside triphosphate pyrophosphatase that hydrolyzes dTTP and UTP. May have a dual role in cell division arrest and in preventing the incorporation of modified nucleotides into cellular nucleic acids. This chain is dTTP/UTP pyrophosphatase, found in Wolbachia pipientis subsp. Culex pipiens (strain wPip).